The sequence spans 765 residues: MAGDDEDRAVPAAEGAPPPSALPPVSGLDVKAAEAEHARLSEEVAQANLAYYQEDAPFISDAEYDASKRRLEEIEARFPDLAHSGSPTAQVGAAPDTRFAKVPHRLPMLSLENGFSQGDVEAFVQRVRSFLNLASGAPLEVTAEPKIDGLSLSLRYEGGRLVQAATRGDGAVGENVTANARTIADIPGQLSGDGYPEVLEIRGECYMSHEDFEKLNQSETGRVFANPRNAAAGSLRQLDPSVTAARPLRFFAYAWGEVSASFAGTQMEAVRRMQAFGFQTNPLTRICASVSEMLSAWAEIEQMRATLGYDIDGVVYKVNDLAYQARLGMRSTTPRWALAHKFPAERAWTRLEAIDIQVGRTGALSPVARLHPVTVGGVVVSNATLHNEDYIAGRGADGSEIRGGKDIRIGDWVEVYRAGDVIPKVADVDLAKRPSEAEPYAFPTTCPECGSPAIREEGDSVRRCTGGLICPAQAVEKLRHFVSRAAFDIEGLGAKLVEELFRDGWIAEPADIFTLQDRYGPGQLTQLKNREGWGEKSAASLFQAIEKRREIPLARLLFALGIRHVGEVAAQDLARHYGSWEALEIALDTARPAALAHRVAEDAALAEREAARAEGRRARPSEARAAALAQVDLSPEATAAWTGLIAADGIGPVLAMSLSDAFANERERAAIDRLVSFLTVLPPEARATDSAIAGKTLVFTGTLEKMTRAEAKARAEALGAHVAGSVSAKTDLLIAGPGAGSKAKKAAELGIKVIDEDEWLAIAQG.

The interval 1–34 (MAGDDEDRAVPAAEGAPPPSALPPVSGLDVKAAE) is disordered. NAD(+)-binding positions include 61-65 (DAEYD), 110-111 (SL), and E144. K146 functions as the N6-AMP-lysine intermediate in the catalytic mechanism. NAD(+) contacts are provided by R167, E204, K317, and K341. Zn(2+)-binding residues include C446, C449, C464, and C470. Residues 687-765 (ATDSAIAGKT…EDEWLAIAQG (79 aa)) enclose the BRCT domain.

This sequence belongs to the NAD-dependent DNA ligase family. LigA subfamily. Mg(2+) serves as cofactor. Mn(2+) is required as a cofactor.

The catalysed reaction is NAD(+) + (deoxyribonucleotide)n-3'-hydroxyl + 5'-phospho-(deoxyribonucleotide)m = (deoxyribonucleotide)n+m + AMP + beta-nicotinamide D-nucleotide.. Its function is as follows. DNA ligase that catalyzes the formation of phosphodiester linkages between 5'-phosphoryl and 3'-hydroxyl groups in double-stranded DNA using NAD as a coenzyme and as the energy source for the reaction. It is essential for DNA replication and repair of damaged DNA. The polypeptide is DNA ligase (Paracoccus denitrificans (strain Pd 1222)).